Here is a 730-residue protein sequence, read N- to C-terminus: Tubulin polyglutamylase ttll-5 (730 aa).

The TTL domain occupies arginine 120–serine 478. ATP contacts are provided by residues serine 278–leucine 281, lysine 291, and aspartate 293. Residues lysine 594–serine 618 form a disordered region. Residues serine 600–serine 618 are compositionally biased toward low complexity.

This sequence belongs to the tubulin--tyrosine ligase family. As to expression, expressed in body wall muscles. Not expressed in sensory neurons.

The enzyme catalyses L-glutamyl-[protein] + L-glutamate + ATP = gamma-L-glutamyl-L-glutamyl-[protein] + ADP + phosphate + H(+). Functionally, polyglutamylase which preferentially modifies alpha-tubulin. Involved in the side-chain initiation step of the polyglutamylation reaction rather than in the elongation step. Together with ttll-4 and ttll-11, required for male mating. Probably by regulating microtubule stability via the glutamylation of tubulin, negatively regulates axon regrowth after injury in PLM neurons. The polypeptide is Tubulin polyglutamylase ttll-5 (Caenorhabditis elegans).